The sequence spans 892 residues: Alanine--tRNA ligase (892 aa).

The Zn(2+) site is built by His-574, His-578, Cys-676, and His-680.

The protein belongs to the class-II aminoacyl-tRNA synthetase family. It depends on Zn(2+) as a cofactor.

It localises to the cytoplasm. The enzyme catalyses tRNA(Ala) + L-alanine + ATP = L-alanyl-tRNA(Ala) + AMP + diphosphate. Catalyzes the attachment of alanine to tRNA(Ala) in a two-step reaction: alanine is first activated by ATP to form Ala-AMP and then transferred to the acceptor end of tRNA(Ala). Also edits incorrectly charged Ser-tRNA(Ala) and Gly-tRNA(Ala) via its editing domain. The sequence is that of Alanine--tRNA ligase from Prochlorococcus marinus (strain SARG / CCMP1375 / SS120).